Here is a 338-residue protein sequence, read N- to C-terminus: RNA 3'-terminal phosphate cyclase (338 aa).

ATP contacts are provided by residues Q103 and 283–287 (YLADQ). H308 acts as the Tele-AMP-histidine intermediate in catalysis.

It belongs to the RNA 3'-terminal cyclase family. Type 1 subfamily.

It is found in the cytoplasm. The enzyme catalyses a 3'-end 3'-phospho-ribonucleotide-RNA + ATP = a 3'-end 2',3'-cyclophospho-ribonucleotide-RNA + AMP + diphosphate. Functionally, catalyzes the conversion of 3'-phosphate to a 2',3'-cyclic phosphodiester at the end of RNA. The mechanism of action of the enzyme occurs in 3 steps: (A) adenylation of the enzyme by ATP; (B) transfer of adenylate to an RNA-N3'P to produce RNA-N3'PP5'A; (C) and attack of the adjacent 2'-hydroxyl on the 3'-phosphorus in the diester linkage to produce the cyclic end product. The biological role of this enzyme is unknown but it is likely to function in some aspects of cellular RNA processing. The polypeptide is RNA 3'-terminal phosphate cyclase (Escherichia coli O6:H1 (strain CFT073 / ATCC 700928 / UPEC)).